The following is a 175-amino-acid chain: Adenine phosphoribosyltransferase (175 aa).

The protein belongs to the purine/pyrimidine phosphoribosyltransferase family. In terms of assembly, homodimer.

The protein localises to the cytoplasm. The enzyme catalyses AMP + diphosphate = 5-phospho-alpha-D-ribose 1-diphosphate + adenine. The protein operates within purine metabolism; AMP biosynthesis via salvage pathway; AMP from adenine: step 1/1. Catalyzes a salvage reaction resulting in the formation of AMP, that is energically less costly than de novo synthesis. The protein is Adenine phosphoribosyltransferase of Synechococcus sp. (strain JA-2-3B'a(2-13)) (Cyanobacteria bacterium Yellowstone B-Prime).